Here is a 296-residue protein sequence, read N- to C-terminus: DNA repair protein complementing XP-A cells homolog (296 aa).

Polar residues predominate over residues 1-10; that stretch reads MSAEVSTNES. The tract at residues 1–39 is disordered; it reads MSAEVSTNESAPPAEKKSKLTNAQKARIERNQAKAQKLR. Basic and acidic residues predominate over residues 26–39; it reads ARIERNQAKAQKLR. Positions 26 to 47 match the Nuclear localization signal motif; sequence ARIERNQAKAQKLREAKLVSHP. Residues C126, C129, C147, and C150 each contribute to the Zn(2+) site. A zinc finger spans residues 126 to 150; the sequence is CLECGDMFADSYLFNNFGHSVCDKC.

Belongs to the XPA family. In terms of tissue distribution, strongly expressed in the central nervous system and muscles.

It is found in the nucleus. In terms of biological role, involved in DNA excision repair. Initiates repair by binding to damaged sites with various affinities, depending on the photoproduct and the transcriptional state of the region. The protein is DNA repair protein complementing XP-A cells homolog (Xpac) of Drosophila melanogaster (Fruit fly).